Reading from the N-terminus, the 225-residue chain is Putative adhesin RT0816 (225 aa).

The signal sequence occupies residues 1–22 (MKKLLLIAATSATILSSSISFA).

In Rickettsia typhi (strain ATCC VR-144 / Wilmington), this protein is Putative adhesin RT0816.